The chain runs to 133 residues: Large ribosomal subunit protein uL14 (133 aa).

This sequence belongs to the universal ribosomal protein uL14 family. As to quaternary structure, part of the 50S ribosomal subunit. Forms a cluster with proteins L3 and L24e, part of which may contact the 16S rRNA in 2 intersubunit bridges.

Its function is as follows. Binds to 23S rRNA. Forms part of two intersubunit bridges in the 70S ribosome. The chain is Large ribosomal subunit protein uL14 from Nanoarchaeum equitans (strain Kin4-M).